Reading from the N-terminus, the 154-residue chain is Myoglobin (154 aa).

Residues 2–148 (GLSDQEWQQV…FRNDMASKYK (147 aa)) form the Globin domain. Histidine 65 contributes to the nitrite binding site. Histidine 65 lines the O2 pocket. Histidine 94 serves as a coordination point for heme b.

The protein belongs to the globin family. As to quaternary structure, monomeric.

The protein resides in the cytoplasm. Its subcellular location is the sarcoplasm. The catalysed reaction is Fe(III)-heme b-[protein] + nitric oxide + H2O = Fe(II)-heme b-[protein] + nitrite + 2 H(+). The enzyme catalyses H2O2 + AH2 = A + 2 H2O. Monomeric heme protein which primary function is to store oxygen and facilitate its diffusion within muscle tissues. Reversibly binds oxygen through a pentacoordinated heme iron and enables its timely and efficient release as needed during periods of heightened demand. Depending on the oxidative conditions of tissues and cells, and in addition to its ability to bind oxygen, it also has a nitrite reductase activity whereby it regulates the production of bioactive nitric oxide. Under stress conditions, like hypoxia and anoxia, it also protects cells against reactive oxygen species thanks to its pseudoperoxidase activity. The protein is Myoglobin (MB) of Cerorhinca monocerata (Rhinoceros auklet).